The primary structure comprises 161 residues: Nucleotide-binding protein Shal_3198 (161 aa).

This sequence belongs to the YajQ family.

Its function is as follows. Nucleotide-binding protein. The chain is Nucleotide-binding protein Shal_3198 from Shewanella halifaxensis (strain HAW-EB4).